We begin with the raw amino-acid sequence, 1379 residues long: Attractin-like protein 1 (1379 aa).

The disordered stretch occupies residues Met-1–Arg-23. The signal sequence occupies residues Met-1–Ala-52. The EGF-like 1 domain maps to Leu-53–Gln-91. Topologically, residues Leu-53 to Leu-1230 are extracellular. 3 disulfides stabilise this stretch: Cys-63–Cys-79, Cys-81–Cys-90, and Cys-93–Cys-119. Asn-76 is a glycosylation site (N-linked (GlcNAc...) asparagine). A CUB domain is found at Cys-93–Asn-209. N-linked (GlcNAc...) asparagine glycans are attached at residues Asn-174 and Asn-198. An EGF-like 2 domain is found at Ser-207 to Asp-245. Cystine bridges form between Cys-211–Cys-221, Cys-215–Cys-233, and Cys-235–Cys-244. Kelch repeat units lie at residues Phe-316–Glu-365, Ile-367–Ser-415, Val-427–Asp-475, Ser-480–Gly-531, Met-533–Gly-591, and Ser-592–Asn-638. N-linked (GlcNAc...) asparagine glycosylation occurs at Asn-380. 3 consecutive PSI domains span residues Asn-614 to Pro-657, Arg-666 to His-709, and Ile-715 to Leu-760. One can recognise a C-type lectin domain in the interval Ile-755–Glu-873. N-linked (GlcNAc...) asparagine glycans are attached at residues Asn-763, Asn-778, and Asn-898. The cysteines at positions 776 and 872 are disulfide-linked. PSI domains lie at Pro-889–Ser-939 and Asn-942–Pro-1012. Cystine bridges form between Cys-1014–Cys-1022, Cys-1016–Cys-1028, Cys-1031–Cys-1040, Cys-1043–Cys-1057, Cys-1060–Cys-1069, Cys-1062–Cys-1076, Cys-1078–Cys-1088, and Cys-1091–Cys-1106. Laminin EGF-like domains lie at Cys-1014–Ala-1059 and Cys-1060–Tyr-1108. The N-linked (GlcNAc...) asparagine glycan is linked to Asn-1157. The helical transmembrane segment at Val-1231–Val-1251 threads the bilayer. The Cytoplasmic segment spans residues Trp-1252–Val-1379. The tract at residues Lys-1354–Val-1379 is disordered.

Interacts with MC4R.

It is found in the membrane. May play a role in melanocortin signaling pathways that regulate energy homeostasis. The sequence is that of Attractin-like protein 1 (ATRNL1) from Homo sapiens (Human).